Reading from the N-terminus, the 735-residue chain is Phosphoribosylformylglycinamidine synthase subunit PurL (735 aa).

Histidine 50 is a catalytic residue. The ATP site is built by tyrosine 53 and lysine 92. Position 94 (glutamate 94) interacts with Mg(2+). Substrate is bound by residues 95-98 (SHNH) and arginine 117. Histidine 96 (proton acceptor) is an active-site residue. A Mg(2+)-binding site is contributed by aspartate 118. Glutamine 241 provides a ligand contact to substrate. Residue aspartate 269 participates in Mg(2+) binding. Substrate is bound at residue 313–315 (ESQ). Positions 495 and 532 each coordinate ATP. Asparagine 533 contacts Mg(2+). Residue serine 535 participates in substrate binding.

It belongs to the FGAMS family. In terms of assembly, monomer. Part of the FGAM synthase complex composed of 1 PurL, 1 PurQ and 2 PurS subunits.

It localises to the cytoplasm. It catalyses the reaction N(2)-formyl-N(1)-(5-phospho-beta-D-ribosyl)glycinamide + L-glutamine + ATP + H2O = 2-formamido-N(1)-(5-O-phospho-beta-D-ribosyl)acetamidine + L-glutamate + ADP + phosphate + H(+). Its pathway is purine metabolism; IMP biosynthesis via de novo pathway; 5-amino-1-(5-phospho-D-ribosyl)imidazole from N(2)-formyl-N(1)-(5-phospho-D-ribosyl)glycinamide: step 1/2. In terms of biological role, part of the phosphoribosylformylglycinamidine synthase complex involved in the purines biosynthetic pathway. Catalyzes the ATP-dependent conversion of formylglycinamide ribonucleotide (FGAR) and glutamine to yield formylglycinamidine ribonucleotide (FGAM) and glutamate. The FGAM synthase complex is composed of three subunits. PurQ produces an ammonia molecule by converting glutamine to glutamate. PurL transfers the ammonia molecule to FGAR to form FGAM in an ATP-dependent manner. PurS interacts with PurQ and PurL and is thought to assist in the transfer of the ammonia molecule from PurQ to PurL. The protein is Phosphoribosylformylglycinamidine synthase subunit PurL of Bartonella henselae (strain ATCC 49882 / DSM 28221 / CCUG 30454 / Houston 1) (Rochalimaea henselae).